We begin with the raw amino-acid sequence, 481 residues long: RuvB-like helicase 2 (481 aa).

ATP is bound at residue 76-83 (GPPSTGKT).

This sequence belongs to the RuvB family. As to quaternary structure, may form heterododecamers with hel-1/rvb1. Component of the SWR1 chromatin remodeling complex, the INO80 chromatin remodeling complex, and of the R2TP complex.

It is found in the nucleus. The catalysed reaction is ATP + H2O = ADP + phosphate + H(+). DNA helicase which participates in several chromatin remodeling complexes, including the SWR1 and the INO80 complexes. The SWR1 complex mediates the ATP-dependent exchange of histone H2A for the H2A variant H2A.Z leading to transcriptional regulation of selected genes by chromatin remodeling. The INO80 complex remodels chromatin by shifting nucleosomes and is involved in DNA repair. Also involved in pre-rRNA processing. This chain is RuvB-like helicase 2 (hel-2), found in Neurospora crassa (strain ATCC 24698 / 74-OR23-1A / CBS 708.71 / DSM 1257 / FGSC 987).